Here is a 194-residue protein sequence, read N- to C-terminus: Peroxiredoxin 2 (194 aa).

The 159-residue stretch at 2 to 160 folds into the Thioredoxin domain; that stretch reads PQLQKPAPAF…TLRLVQAFQY (159 aa). Residue Cys-47 is the Cysteine sulfenic acid (-SOH) intermediate of the active site. Thr-193 is subject to Phosphothreonine. A Phosphoserine modification is found at Ser-194.

This sequence belongs to the peroxiredoxin family. AhpC/Prx1 subfamily. In terms of assembly, homodimer; disulfide-linked, upon oxidation. 5 homodimers assemble to form a ring-like decamer. Also exists as a monomer. The enzyme can be inactivated by further oxidation of the cysteine sulfenic acid (C(P)-SOH) to sulphinic acid (C(P)-SO2H) instead of its condensation to a disulfide bond. It can be reactivated by forming a transient disulfide bond with sulfiredoxin SRXN1, which reduces the cysteine sulfinic acid in an ATP- and Mg-dependent manner. In terms of processing, conjugated to URM1, a ubiquitin-like protein. Detected in the head and body (at protein level).

It localises to the cytoplasm. The catalysed reaction is a hydroperoxide + [thioredoxin]-dithiol = an alcohol + [thioredoxin]-disulfide + H2O. Thiol-specific peroxidase that catalyzes the reduction of hydrogen peroxide and organic hydroperoxides to water and alcohols, respectively. Plays a role in cell protection against oxidative stress by detoxifying peroxides and as sensor of hydrogen peroxide-mediated signaling events. Might participate in the signaling cascades of growth factors and tumor necrosis factor-alpha by regulating the intracellular concentrations of H(2)O(2). Reduces an intramolecular disulfide bond in GDPD5 that gates the ability to GDPD5 to drive postmitotic motor neuron differentiation. This Drosophila melanogaster (Fruit fly) protein is Peroxiredoxin 2.